The chain runs to 236 residues: Phosphoribosylaminoimidazole-succinocarboxamide synthase (236 aa).

Belongs to the SAICAR synthetase family.

The catalysed reaction is 5-amino-1-(5-phospho-D-ribosyl)imidazole-4-carboxylate + L-aspartate + ATP = (2S)-2-[5-amino-1-(5-phospho-beta-D-ribosyl)imidazole-4-carboxamido]succinate + ADP + phosphate + 2 H(+). The protein operates within purine metabolism; IMP biosynthesis via de novo pathway; 5-amino-1-(5-phospho-D-ribosyl)imidazole-4-carboxamide from 5-amino-1-(5-phospho-D-ribosyl)imidazole-4-carboxylate: step 1/2. This chain is Phosphoribosylaminoimidazole-succinocarboxamide synthase, found in Wolinella succinogenes (strain ATCC 29543 / DSM 1740 / CCUG 13145 / JCM 31913 / LMG 7466 / NCTC 11488 / FDC 602W) (Vibrio succinogenes).